The chain runs to 591 residues: Serine/threonine-protein kinase Nek2 (591 aa).

The 255-residue stretch at 4-258 (YEVLEQIGKG…AAQLLKHPQL (255 aa)) folds into the Protein kinase domain. ATP is bound by residues 10–18 (IGKGAFGSA) and lysine 33. Aspartate 129 (proton acceptor) is an active-site residue. 3 disordered regions span residues 309–331 (LGNE…SSTR), 387–408 (EPPK…TTPN), and 500–534 (RTDG…DTSS). Polar residues-rich tracts occupy residues 391–408 (TSYN…TTPN) and 504–534 (DNGS…DTSS).

This sequence belongs to the protein kinase superfamily. NEK Ser/Thr protein kinase family. NIMA subfamily.

The enzyme catalyses L-seryl-[protein] + ATP = O-phospho-L-seryl-[protein] + ADP + H(+). It carries out the reaction L-threonyl-[protein] + ATP = O-phospho-L-threonyl-[protein] + ADP + H(+). Functionally, may be involved in plant development processes. The polypeptide is Serine/threonine-protein kinase Nek2 (NEK2) (Oryza sativa subsp. indica (Rice)).